The primary structure comprises 332 residues: L-lactate dehydrogenase A chain (332 aa).

Ala2 is modified (N-acetylalanine). N6-acetyllysine; alternate is present on Lys5. Lys5 is modified (N6-succinyllysine; alternate). Lys14 is modified (N6-acetyllysine). 29–57 (GAVGMACAISILMKDLADEVALVDVMEDK) contributes to the NAD(+) binding site. An N6-acetyllysine; alternate modification is found at Lys57. A Glycyl lysine isopeptide (Lys-Gly) (interchain with G-Cter in SUMO2); alternate cross-link involves residue Lys57. Position 81 is an N6-acetyllysine (Lys81). Arg106 provides a ligand contact to substrate. Position 118 is an N6-acetyllysine; alternate (Lys118). Lys118 bears the N6-succinyllysine; alternate mark. Lys126 bears the N6-acetyllysine mark. An NAD(+)-binding site is contributed by Asn138. Substrate is bound by residues Asn138 and Arg169. Residue His193 is the Proton acceptor of the active site. N6-acetyllysine occurs at positions 224 and 232. Tyr239 bears the Phosphotyrosine mark. At Lys243 the chain carries N6-acetyllysine. Thr248 lines the substrate pocket. The residue at position 309 (Thr309) is a Phosphothreonine. Residue Lys318 is modified to N6-acetyllysine; alternate. At Lys318 the chain carries N6-succinyllysine; alternate. The residue at position 322 (Thr322) is a Phosphothreonine.

The protein belongs to the LDH/MDH superfamily. LDH family. As to quaternary structure, homotetramer. Interacts with PTEN upstream reading frame protein MP31. ISGylated.

The protein resides in the cytoplasm. It catalyses the reaction (S)-lactate + NAD(+) = pyruvate + NADH + H(+). Its pathway is fermentation; pyruvate fermentation to lactate; (S)-lactate from pyruvate: step 1/1. Its function is as follows. Interconverts simultaneously and stereospecifically pyruvate and lactate with concomitant interconversion of NADH and NAD(+). This chain is L-lactate dehydrogenase A chain (LDHA), found in Bos taurus (Bovine).